The primary structure comprises 73 residues: MLVISRKKGESLLIGEDIEITVTKIEEGAVKLSISAPRSVTILRKELYREIEEENKNSAASDISVLKKLKGKK.

This sequence belongs to the CsrA/RsmA family. Homodimer; the beta-strands of each monomer intercalate to form a hydrophobic core, while the alpha-helices form wings that extend away from the core.

The protein resides in the cytoplasm. In terms of biological role, a translational regulator that binds mRNA to regulate translation initiation and/or mRNA stability. Usually binds in the 5'-UTR at or near the Shine-Dalgarno sequence preventing ribosome-binding, thus repressing translation. Its main target seems to be the major flagellin gene, while its function is anatagonized by FliW. This Clostridium kluyveri (strain NBRC 12016) protein is Translational regulator CsrA.